The primary structure comprises 675 residues: uncharacterized protein (675 aa).

This is an uncharacterized protein from Homo sapiens (Human).